We begin with the raw amino-acid sequence, 313 residues long: MTARRVLNPVQRVAIFGGTHGNELSGVFLVNHWLKHGEEIARPGIEVRPFITNPGAVEKCVRYVDTDLNRVFDSENLRNENNLNLSYEVKRAQYINSIFGPKGSEDAYDVILDLHNTTSHMGATLILEDSKDDFTIQMFNYIKTSMAPLACSVLLIEHPRLKYATTRSIAKHPIGVEVGPQPQGVLRADVLDKMRRIIKHALDFINYFNDGKEFLPCILEVFKVLDNVAYPRNANGDCTAIIHNNLQDQDWKELKPGDPMFLTLDGRMIAYEGDCIVYPTFINEAAYYEKNQAFTTTQKMTLCAQAIRCTEPK.

Zn(2+) is bound by residues histidine 20 and glutamate 23. Substrate-binding positions include arginine 62 and 69-70 (NR). Residue histidine 115 coordinates Zn(2+). Substrate-binding positions include 163–167 (YATTR), glutamate 177, and tyrosine 287. Residue glutamate 177 is part of the active site.

Belongs to the AspA/AstE family. Aspartoacylase subfamily. It depends on Zn(2+) as a cofactor.

The protein localises to the cytoplasm. The protein resides in the nucleus. The catalysed reaction is an N-acyl-L-aspartate + H2O = a carboxylate + L-aspartate. In terms of biological role, catalyzes the deacetylation of N-acetylaspartic acid (NAA) to produce acetate and L-aspartate. The protein is Aspartoacylase (aspa) of Xenopus tropicalis (Western clawed frog).